The chain runs to 89 residues: Ixosin-B (89 aa).

Positions 1–26 are cleaved as a signal peptide; the sequence is MASGWTHRLLLLAAVVTLGATPIAAA. A propeptide spanning residues 27–57 is cleaved from the precursor; sequence SMEYLVTAPGYLTPNADIKITAVVTNPSSAG. The tract at residues 68–89 is disordered; the sequence is SGIQPEQHSSGKSDVRRWRSRY. The span at 76–89 shows a compositional bias: basic and acidic residues; that stretch reads SSGKSDVRRWRSRY.

Its function is as follows. Has antifungal activity against C.albicans. Has antibacterial activity against the Gram-positive bacterium S.aureus and the Gram-negative bacterium E.coli. Lacks hemolytic activity against rabbit erythrocytes. This Ixodes sinensis (Hard tick) protein is Ixosin-B.